A 270-amino-acid polypeptide reads, in one-letter code: uncharacterized protein (270 aa).

Residues 1 to 22 form the signal peptide; it reads MEYIKKLLCTMSVLLLIIFIGG. Residue Cys23 is the site of N-palmitoyl cysteine attachment. Cys23 is lipidated: S-diacylglycerol cysteine.

This sequence belongs to the staphylococcal tandem lipoprotein family.

The protein localises to the cell membrane. This is an uncharacterized protein from Staphylococcus aureus (strain bovine RF122 / ET3-1).